The following is a 147-amino-acid chain: Large ribosomal subunit protein uL15 (147 aa).

Basic and acidic residues predominate over residues 1–13 (MELHSLKAAEGSR). The tract at residues 1–57 (MELHSLKAAEGSRKVRNRVGRGTSSGNGKTSGRGQKGQKSRSGGGVRPGFEGGQTEL) is disordered. Composition is skewed to gly residues over residues 23–35 (TSSG…GRGQ) and 42–52 (SGGGVRPGFEG).

It belongs to the universal ribosomal protein uL15 family. Part of the 50S ribosomal subunit.

Binds to the 23S rRNA. This chain is Large ribosomal subunit protein uL15, found in Lactococcus lactis subsp. cremoris (strain MG1363).